A 132-amino-acid chain; its full sequence is Small ribosomal subunit protein uS8 (132 aa).

This sequence belongs to the universal ribosomal protein uS8 family. Part of the 30S ribosomal subunit. Contacts proteins S5 and S12.

One of the primary rRNA binding proteins, it binds directly to 16S rRNA central domain where it helps coordinate assembly of the platform of the 30S subunit. This Rhodococcus erythropolis (strain PR4 / NBRC 100887) protein is Small ribosomal subunit protein uS8.